Here is a 255-residue protein sequence, read N- to C-terminus: Small ribosomal subunit protein eS1 (255 aa).

The segment covering 1 to 18 has biased composition (basic residues); it reads MAVGKNKRLSKGKKGLKK. The interval 1–28 is disordered; sequence MAVGKNKRLSKGKKGLKKRTQDPFSRKD. An N-acetylalanine; partial modification is found at Ala2. Residues 19–28 show a composition bias toward basic and acidic residues; that stretch reads RTQDPFSRKD.

It belongs to the eukaryotic ribosomal protein eS1 family. In terms of assembly, component of the small ribosomal subunit. Mature ribosomes consist of a small (40S) and a large (60S) subunit. The 40S subunit contains about 33 different proteins and 1 molecule of RNA (18S). The 60S subunit contains about 49 different proteins and 3 molecules of RNA (25S, 5.8S and 5S).

The protein resides in the cytoplasm. This chain is Small ribosomal subunit protein eS1, found in Ajellomyces capsulatus (strain H143) (Darling's disease fungus).